A 103-amino-acid chain; its full sequence is ATP synthase subunit c (103 aa).

Transmembrane regions (helical) follow at residues 3 to 23 (FLALLCLGMVGFAFGAEVSGL), 30 to 50 (SIAGAVIGLGIAALGGAIGMG), and 74 to 94 (MFIALALIEAQVIYTLVLALI).

This sequence belongs to the ATPase C chain family. F-type ATPases have 2 components, F(1) - the catalytic core - and F(0) - the membrane proton channel. F(1) has five subunits: alpha(3), beta(3), gamma(1), delta(1), epsilon(1). F(0) has three main subunits: a(1), b(2) and c(10-14). The alpha and beta chains form an alternating ring which encloses part of the gamma chain. F(1) is attached to F(0) by a central stalk formed by the gamma and epsilon chains, while a peripheral stalk is formed by the delta and b chains.

The protein localises to the cell inner membrane. Functionally, f(1)F(0) ATP synthase produces ATP from ADP in the presence of a proton or sodium gradient. F-type ATPases consist of two structural domains, F(1) containing the extramembraneous catalytic core and F(0) containing the membrane proton channel, linked together by a central stalk and a peripheral stalk. During catalysis, ATP synthesis in the catalytic domain of F(1) is coupled via a rotary mechanism of the central stalk subunits to proton translocation. In terms of biological role, key component of the F(0) channel; it plays a direct role in translocation across the membrane. A homomeric c-ring of between 10-14 subunits forms the central stalk rotor element with the F(1) delta and epsilon subunits. The polypeptide is ATP synthase subunit c (Helicobacter hepaticus (strain ATCC 51449 / 3B1)).